A 166-amino-acid chain; its full sequence is Macrocypin-5a (166 aa).

The interval 20-39 is disordered; the sequence is NIPGGMYASSKDGKDEPVTA.

It belongs to the protease inhibitor I85 family.

Inhibits papain and cysteine cathepsin endopeptidases, and also inhibits cathepsins B and H, which exhibit both exopeptidase and endopeptidase activities. The protein is Macrocypin-5a of Macrolepiota procera (Parasol mushroom).